Reading from the N-terminus, the 154-residue chain is 3-dehydroquinate dehydratase (154 aa).

Catalysis depends on Tyr22, which acts as the Proton acceptor. Substrate-binding residues include Asn73, His79, and Asp86. His99 serves as the catalytic Proton donor. Substrate contacts are provided by residues 100-101 (LS) and Arg110.

Belongs to the type-II 3-dehydroquinase family. As to quaternary structure, homododecamer.

The catalysed reaction is 3-dehydroquinate = 3-dehydroshikimate + H2O. It participates in metabolic intermediate biosynthesis; chorismate biosynthesis; chorismate from D-erythrose 4-phosphate and phosphoenolpyruvate: step 3/7. In terms of biological role, catalyzes a trans-dehydration via an enolate intermediate. In Carboxydothermus hydrogenoformans (strain ATCC BAA-161 / DSM 6008 / Z-2901), this protein is 3-dehydroquinate dehydratase.